A 122-amino-acid polypeptide reads, in one-letter code: Large ribosomal subunit protein uL14 (122 aa).

This sequence belongs to the universal ribosomal protein uL14 family. Part of the 50S ribosomal subunit. Forms a cluster with proteins L3 and L19. In the 70S ribosome, L14 and L19 interact and together make contacts with the 16S rRNA in bridges B5 and B8.

Functionally, binds to 23S rRNA. Forms part of two intersubunit bridges in the 70S ribosome. This Trichlorobacter lovleyi (strain ATCC BAA-1151 / DSM 17278 / SZ) (Geobacter lovleyi) protein is Large ribosomal subunit protein uL14.